A 210-amino-acid chain; its full sequence is Ribosomal RNA small subunit methyltransferase G (210 aa).

S-adenosyl-L-methionine contacts are provided by residues Gly-76, Leu-81, 127–128 (VE), and Arg-142.

It belongs to the methyltransferase superfamily. RNA methyltransferase RsmG family.

The protein localises to the cytoplasm. The catalysed reaction is guanosine(527) in 16S rRNA + S-adenosyl-L-methionine = N(7)-methylguanosine(527) in 16S rRNA + S-adenosyl-L-homocysteine. Its function is as follows. Specifically methylates the N7 position of guanine in position 527 of 16S rRNA. The sequence is that of Ribosomal RNA small subunit methyltransferase G from Vibrio cholerae serotype O1 (strain ATCC 39315 / El Tor Inaba N16961).